We begin with the raw amino-acid sequence, 101 residues long: Urease subunit beta (101 aa).

The protein belongs to the urease beta subunit family. As to quaternary structure, heterotrimer of UreA (gamma), UreB (beta) and UreC (alpha) subunits. Three heterotrimers associate to form the active enzyme.

It localises to the cytoplasm. The enzyme catalyses urea + 2 H2O + H(+) = hydrogencarbonate + 2 NH4(+). Its pathway is nitrogen metabolism; urea degradation; CO(2) and NH(3) from urea (urease route): step 1/1. This is Urease subunit beta from Polaromonas naphthalenivorans (strain CJ2).